Here is a 622-residue protein sequence, read N- to C-terminus: Presenilin-A (622 aa).

The segment covering 1–16 (MKENEDEINKTDEKYK) has biased composition (basic and acidic residues). Disordered stretches follow at residues 1–65 (MKEN…NLEN) and 132–160 (VSEQ…DETE). The Cytoplasmic segment spans residues 1–168 (MKENEDEINK…TEVPELVDYS (168 aa)). The span at 21–62 (SNNGNNKNKNNNNNNNNNNNNNNNNNNNNNNNNNNNNNGNSN) shows a compositional bias: low complexity. The span at 147-160 (DLDEDDDDDDDETE) shows a compositional bias: acidic residues. A helical membrane pass occupies residues 169-189 (EMIVSILYPVCITMVIVVLAI). The Lumenal segment spans residues 190–227 (RAISSSTSKNSQIVEISNDNSGGNGDSSSGADKMVFDS). A helical membrane pass occupies residues 228–248 (VVNSLIFLAVIILSTTIMVVL). Residues 249–265 (YKFKLMKALYAWLMGTS) lie on the Cytoplasmic side of the membrane. The chain crosses the membrane as a helical span at residues 266 to 286 (ILLLGVFGGFLFLILLAYLNL). The Lumenal portion of the chain corresponds to 287-289 (GLD). The chain crosses the membrane as a helical span at residues 290 to 310 (YVTFVIVVWNFSVGGIVCIFW). Tyr311 is a topological domain (cytoplasmic). Residues 312–332 (SPKLLNQGYLISISVLMALFF) form a helical membrane-spanning segment. Over 333-341 (SRLPDWTTW) the chain is Lumenal. Residues 342–362 (GILSIVSIYDIFAVLCPGGPL) form a helical membrane-spanning segment. Asp351 is an active-site residue. Over 363-538 (RILIETAQKR…SYVKPKQSIR (176 aa)) the chain is Cytoplasmic. Positions 419–477 (NNNNNEDENKNNTEDGNNNNNKNKNNNNNNNNRIENENGAENSSENGSITPPPTIPNFI) are disordered. Over residues 432–466 (EDGNNNNNKNKNNNNNNNNRIENENGAENSSENGS) the composition is skewed to low complexity. The helical transmembrane segment at 539–559 (LGLGDFVFYSVLIGKAASYQI) threads the bilayer. Asp543 is a catalytic residue. Residues 560–562 (TTV) are Lumenal-facing. A helical membrane pass occupies residues 563–583 (FTVFIAIITGLFLTLILLAVF). At 584–588 (RRALP) the chain is on the cytoplasmic side. The PAL signature appears at 588 to 590 (PAL). Positions 589–609 (ALPMSIIFGIIVFFLTFKILI) form an intramembrane region, helical. Topologically, residues 610–622 (QYIYFLGENQIFV) are cytoplasmic.

The protein belongs to the peptidase A22A family. As to quaternary structure, homodimer. Component of the gamma-secretase complex, a complex composed of a presenilin homodimer, nicastrin, aph1 and pen2.

Its subcellular location is the endoplasmic reticulum membrane. The protein resides in the golgi apparatus membrane. Probable catalytic subunit of the gamma-secretase complex, an endoprotease complex that catalyzes the intramembrane cleavage of integral membrane proteins such as Notch receptors. Requires the other members of the gamma-secretase complex to have a protease activity. The polypeptide is Presenilin-A (psenA) (Dictyostelium discoideum (Social amoeba)).